The primary structure comprises 317 residues: DNA-directed RNA polymerase subunit alpha 2 (317 aa).

Positions 1–227 (MALENLLHPT…NQLRNIVDIE (227 aa)) are alpha N-terminal domain (alpha-NTD). Residues 241–317 (INPILLKHVE…TLIENWPQDL (77 aa)) form an alpha C-terminal domain (alpha-CTD) region.

The protein belongs to the RNA polymerase alpha chain family. Homodimer. The RNAP catalytic core consists of 2 alpha, 1 beta, 1 beta' and 1 omega subunit. When a sigma factor is associated with the core the holoenzyme is formed, which can initiate transcription.

The enzyme catalyses RNA(n) + a ribonucleoside 5'-triphosphate = RNA(n+1) + diphosphate. Functionally, DNA-dependent RNA polymerase catalyzes the transcription of DNA into RNA using the four ribonucleoside triphosphates as substrates. The protein is DNA-directed RNA polymerase subunit alpha 2 of Francisella tularensis subsp. holarctica (strain FTNF002-00 / FTA).